A 1047-amino-acid chain; its full sequence is Atrial natriuretic peptide receptor 2 (1047 aa).

The first 16 residues, 1–16, serve as a signal peptide directing secretion; that stretch reads MALPSLLLVVAALAGG. Residues 17–458 are Extracellular-facing; it reads VRPPGARNLT…DKTPLSTLAI (442 aa). N-linked (GlcNAc...) asparagine glycosylation is found at asparagine 24 and asparagine 35. Cysteines 75 and 101 form a disulfide. N-linked (GlcNAc...) asparagine glycosylation is found at asparagine 161, asparagine 195, asparagine 244, asparagine 277, and asparagine 349. A helical membrane pass occupies residues 459-478; the sequence is VALGTGVTFIMFGVSSFLIF. The Cytoplasmic portion of the chain corresponds to 479–1047; that stretch reads RKLMLEKELA…GEQKGPPGLL (569 aa). At serine 513 the chain carries Phosphoserine. The region spanning 513–786 is the Protein kinase domain; that stretch reads SRLTLSLRGS…PDFGQIKGFI (274 aa). Threonine 516 carries the post-translational modification Phosphothreonine. Residues serine 518, serine 522, serine 523, and serine 526 each carry the phosphoserine modification. A Phosphothreonine modification is found at threonine 529. Residues 861–991 form the Guanylate cyclase domain; sequence TIYFSDIVGF…DTVNTASRME (131 aa).

This sequence belongs to the adenylyl cyclase class-4/guanylyl cyclase family. Phosphorylated. Phosphorylation of the protein kinase-like domain is required for full activation by CNP. In terms of processing, glycosylated. As to expression, widely expressed. Expressed in the columnar proliferating and prehypertrophic chondrocyte layers of the tibia.

The protein resides in the cell membrane. The catalysed reaction is GTP = 3',5'-cyclic GMP + diphosphate. Functionally, receptor for the C-type natriuretic peptide NPPC/CNP hormone. Has guanylate cyclase activity upon binding of its ligand. May play a role in the regulation of skeletal growth. This chain is Atrial natriuretic peptide receptor 2 (Npr2), found in Mus musculus (Mouse).